The following is a 506-amino-acid chain: Maturase K (506 aa).

It belongs to the intron maturase 2 family. MatK subfamily.

It localises to the plastid. Its subcellular location is the chloroplast. Functionally, usually encoded in the trnK tRNA gene intron. Probably assists in splicing its own and other chloroplast group II introns. The chain is Maturase K from Prunus dulcis (Almond).